Reading from the N-terminus, the 861-residue chain is Leucine--tRNA ligase (861 aa).

The 'HIGH' region motif lies at 42 to 52 (PYPSGRLHMGH). Positions 619–623 (KMSKS) match the 'KMSKS' region motif. Position 622 (K622) interacts with ATP.

It belongs to the class-I aminoacyl-tRNA synthetase family.

It is found in the cytoplasm. It catalyses the reaction tRNA(Leu) + L-leucine + ATP = L-leucyl-tRNA(Leu) + AMP + diphosphate. This is Leucine--tRNA ligase from Haemophilus influenzae (strain 86-028NP).